The chain runs to 326 residues: Vitamin B12 import system permease protein BtuC (326 aa).

The next 9 helical transmembrane spans lie at 15 to 35 (WLLS…CAGE), 61 to 81 (LAVL…QALF), 88 to 108 (PGLL…VLLG), 112 to 132 (LPGW…TLIL), 146 to 166 (LLAG…AIYF), 184 to 204 (GGVD…LIWI), 240 to 260 (GWMV…GLVI), 274 to 294 (VLLP…DVVA), and 302 to 322 (ELPI…WLLL).

The protein belongs to the binding-protein-dependent transport system permease family. FecCD subfamily. In terms of assembly, the complex is composed of two ATP-binding proteins (BtuD), two transmembrane proteins (BtuC) and a solute-binding protein (BtuF).

It localises to the cell inner membrane. Functionally, part of the ABC transporter complex BtuCDF involved in vitamin B12 import. Involved in the translocation of the substrate across the membrane. This chain is Vitamin B12 import system permease protein BtuC, found in Salmonella enteritidis PT4 (strain P125109).